Here is a 151-residue protein sequence, read N- to C-terminus: SsrA-binding protein (151 aa).

This sequence belongs to the SmpB family.

It localises to the cytoplasm. Required for rescue of stalled ribosomes mediated by trans-translation. Binds to transfer-messenger RNA (tmRNA), required for stable association of tmRNA with ribosomes. tmRNA and SmpB together mimic tRNA shape, replacing the anticodon stem-loop with SmpB. tmRNA is encoded by the ssrA gene; the 2 termini fold to resemble tRNA(Ala) and it encodes a 'tag peptide', a short internal open reading frame. During trans-translation Ala-aminoacylated tmRNA acts like a tRNA, entering the A-site of stalled ribosomes, displacing the stalled mRNA. The ribosome then switches to translate the ORF on the tmRNA; the nascent peptide is terminated with the 'tag peptide' encoded by the tmRNA and targeted for degradation. The ribosome is freed to recommence translation, which seems to be the essential function of trans-translation. This Nitrosomonas europaea (strain ATCC 19718 / CIP 103999 / KCTC 2705 / NBRC 14298) protein is SsrA-binding protein.